Consider the following 280-residue polypeptide: MINNLKTFILLASLTALLVVIGGLLGGSTGMLVALLFAGIMNFSAYWYSDTLVLKMYNAEPLSNNHFVYHIVSELAHRAGTSVPKVYLINNSTPNAFATGRNPENASIAVTTGLLDRLTQEEITGVLAHELAHVIHRDTLINVVSATIAGAISGIANMFMWLSMFGHNSNNQEGVHPVVGMIMMIVAPLAAGLIQMAISRSREFEADAGGAQISGNPQWLASALLKLDQANHEQYFDEAETHPATAHLFIINPLNGEKLANLFSTHPSTAERVARLRAMY.

Transmembrane regions (helical) follow at residues 7–26 (TFILLASLTALLVVIGGLLG) and 30–49 (GMLVALLFAGIMNFSAYWYS). His129 is a binding site for Zn(2+). Residue Glu130 is part of the active site. His133 serves as a coordination point for Zn(2+). 2 helical membrane passes run 146-166 (ATIAGAISGIANMFMWLSMFG) and 178-198 (VVGMIMMIVAPLAAGLIQMAI). Glu203 serves as a coordination point for Zn(2+).

Belongs to the peptidase M48B family. It depends on Zn(2+) as a cofactor.

It is found in the cell inner membrane. The protein is Protease HtpX of Legionella pneumophila (strain Lens).